The following is a 156-amino-acid chain: Arginine repressor (156 aa).

This sequence belongs to the ArgR family.

It localises to the cytoplasm. It participates in amino-acid biosynthesis; L-arginine biosynthesis [regulation]. Its function is as follows. Regulates arginine biosynthesis genes. The sequence is that of Arginine repressor from Yersinia enterocolitica serotype O:8 / biotype 1B (strain NCTC 13174 / 8081).